Reading from the N-terminus, the 183-residue chain is Large ribosomal subunit protein uL5 (183 aa).

It belongs to the universal ribosomal protein uL5 family. Part of the 50S ribosomal subunit; part of the 5S rRNA/L5/L18/L25 subcomplex. Contacts the 5S rRNA and the P site tRNA. Forms a bridge to the 30S subunit in the 70S ribosome.

Its function is as follows. This is one of the proteins that bind and probably mediate the attachment of the 5S RNA into the large ribosomal subunit, where it forms part of the central protuberance. In the 70S ribosome it contacts protein S13 of the 30S subunit (bridge B1b), connecting the 2 subunits; this bridge is implicated in subunit movement. Contacts the P site tRNA; the 5S rRNA and some of its associated proteins might help stabilize positioning of ribosome-bound tRNAs. This Leptospira biflexa serovar Patoc (strain Patoc 1 / Ames) protein is Large ribosomal subunit protein uL5.